Consider the following 833-residue polypeptide: Leucine--tRNA ligase (833 aa).

The 'HIGH' region motif lies at 41–52 (PYPSGAGLHVGH). A 'KMSKS' region motif is present at residues 610-614 (KMSKS). K613 serves as a coordination point for ATP.

The protein belongs to the class-I aminoacyl-tRNA synthetase family.

It is found in the cytoplasm. The catalysed reaction is tRNA(Leu) + L-leucine + ATP = L-leucyl-tRNA(Leu) + AMP + diphosphate. The sequence is that of Leucine--tRNA ligase from Streptococcus pneumoniae serotype 4 (strain ATCC BAA-334 / TIGR4).